The primary structure comprises 297 residues: Transcription factor LRL3 (297 aa).

The tract at residues 59 to 109 (PDQFHHPQESGGPTMGSQEGLQPQGTVSTTSAPVVRQKPRVRARRGQATDP) is disordered. The segment covering 73–90 (MGSQEGLQPQGTVSTTSA) has biased composition (polar residues). The basic motif; degenerate stretch occupies residues 105 to 118 (QATDPHSIAERLRR). In terms of domain architecture, bHLH spans 105–154 (QATDPHSIAERLRRERIAERMKSLQELVPNTNKTDKASMLDEIIEYVRFL). A helix-loop-helix motif region spans residues 119–154 (ERIAERMKSLQELVPNTNKTDKASMLDEIIEYVRFL).

Homodimer. In terms of tissue distribution, expressed in trichomes of the root maturation zone. Detected constitutively in flowers.

It localises to the nucleus. In terms of biological role, transcription factor that regulates the development of root hairs. Does not seem to be involved in the regulation of sperm cell development. This is Transcription factor LRL3 from Arabidopsis thaliana (Mouse-ear cress).